The sequence spans 522 residues: Glutathione reductase, mitochondrial (522 aa).

The transit peptide at 1–43 directs the protein to the mitochondrion; it reads MALLPRALSAGAGPSWRRAARAFRGFLLLLPEPAALTRALSRA. FAD-binding residues include Ser74 and Gly75. Glutathione is bound at residue Ser74. Position 81 (Arg81) interacts with glutathione. Glu94 contacts FAD. The residue at position 97 (Lys97) is an N6-acetyllysine. Residues Thr101, Cys102, and Lys110 each contribute to the FAD site. A disulfide bond links Cys102 and Cys107. Position 158 (Tyr158) interacts with glutathione. Residue Ala174 participates in FAD binding. NADP(+) is bound by residues Ala239, Ile242, Glu245, Arg262, Arg268, and Gly334. Asp375 is an FAD binding site. Leu381 lines the NADP(+) pocket. Position 383 (Thr383) interacts with FAD. Residue Arg391 coordinates glutathione. An NADP(+)-binding site is contributed by Val414. His511 contacts FAD. His511 functions as the Proton acceptor in the catalytic mechanism.

Belongs to the class-I pyridine nucleotide-disulfide oxidoreductase family. In terms of assembly, homodimer; disulfide-linked. It depends on FAD as a cofactor.

The protein localises to the mitochondrion. The protein resides in the cytoplasm. The catalysed reaction is 2 glutathione + NADP(+) = glutathione disulfide + NADPH + H(+). Catalyzes the reduction of glutathione disulfide (GSSG) to reduced glutathione (GSH). Constitutes the major mechanism to maintain a high GSH:GSSG ratio in the cytosol. The sequence is that of Glutathione reductase, mitochondrial (GSR) from Homo sapiens (Human).